The primary structure comprises 206 residues: Holliday junction branch migration complex subunit RuvA (206 aa).

A domain I region spans residues 1–64 (MIGRLRGNLL…EDAQLLYGFN (64 aa)). Residues 65–143 (TKKERALFRE…GWGAGDLFTP (79 aa)) are domain II. The interval 144-157 (ADTTSMDDASDLIS) is flexible linker. A domain III region spans residues 158-206 (SPQSAQDEAVSALISLGYKPVQASKMVSQVAKPDMTSESLIRESLKSMI).

It belongs to the RuvA family. Homotetramer. Forms an RuvA(8)-RuvB(12)-Holliday junction (HJ) complex. HJ DNA is sandwiched between 2 RuvA tetramers; dsDNA enters through RuvA and exits via RuvB. An RuvB hexamer assembles on each DNA strand where it exits the tetramer. Each RuvB hexamer is contacted by two RuvA subunits (via domain III) on 2 adjacent RuvB subunits; this complex drives branch migration. In the full resolvosome a probable DNA-RuvA(4)-RuvB(12)-RuvC(2) complex forms which resolves the HJ.

Its subcellular location is the cytoplasm. Its function is as follows. The RuvA-RuvB-RuvC complex processes Holliday junction (HJ) DNA during genetic recombination and DNA repair, while the RuvA-RuvB complex plays an important role in the rescue of blocked DNA replication forks via replication fork reversal (RFR). RuvA specifically binds to HJ cruciform DNA, conferring on it an open structure. The RuvB hexamer acts as an ATP-dependent pump, pulling dsDNA into and through the RuvAB complex. HJ branch migration allows RuvC to scan DNA until it finds its consensus sequence, where it cleaves and resolves the cruciform DNA. The protein is Holliday junction branch migration complex subunit RuvA of Aliivibrio salmonicida (strain LFI1238) (Vibrio salmonicida (strain LFI1238)).